The primary structure comprises 310 residues: Ribonuclease Z (310 aa).

Zn(2+) is bound by residues H61, H63, D65, H66, and H139. The active-site Proton acceptor is D65. The disordered stretch occupies residues 150 to 175 (EDDRPGRFDRPKAEELGVPVGPKFGR). Basic and acidic residues predominate over residues 153 to 164 (RPGRFDRPKAEE). Zn(2+) is bound by residues D210 and H268.

It belongs to the RNase Z family. Homodimer. Zn(2+) is required as a cofactor.

It catalyses the reaction Endonucleolytic cleavage of RNA, removing extra 3' nucleotides from tRNA precursor, generating 3' termini of tRNAs. A 3'-hydroxy group is left at the tRNA terminus and a 5'-phosphoryl group is left at the trailer molecule.. Zinc phosphodiesterase, which displays some tRNA 3'-processing endonuclease activity. Probably involved in tRNA maturation, by removing a 3'-trailer from precursor tRNA. The protein is Ribonuclease Z of Halorubrum lacusprofundi (strain ATCC 49239 / DSM 5036 / JCM 8891 / ACAM 34).